A 502-amino-acid polypeptide reads, in one-letter code: Alpha-ketoglutarate-dependent dioxygenase FTO (502 aa).

Residues 32-324 form a fe2OG dioxygenase domain region; the sequence is TPKDDEFYQQ…SSTHRVAECS (293 aa). Positions 96 and 108 each coordinate substrate. N202 is a 2-oxoglutarate binding site. Positions 210 to 221 are loop L1; predicted to block binding of double-stranded DNA or RNA; the sequence is PYLKEEPYFGMG. Residue K213 is modified to N6-acetyllysine. H228 and D230 together coordinate Fe cation. 228-231 is a binding site for substrate; the sequence is HHDE. Position 292 (Y292) interacts with 2-oxoglutarate. Residue H304 participates in Fe cation binding. 2-oxoglutarate-binding positions include 313–315, T317, and R319; that span reads RFS.

This sequence belongs to the fto family. As to quaternary structure, monomer. May also exist as homodimer. The cofactor is Fe(2+). Ubiquitous. Highly expressed in teeth and weakly in bone.

It is found in the nucleus. The protein localises to the nucleus speckle. It localises to the cytoplasm. It catalyses the reaction a 5'-end (N(7)-methyl 5'-triphosphoguanosine)-(N(6),2'-O-dimethyladenosine) in mRNA + 2-oxoglutarate + O2 = a 5'-end (N(7)-methyl 5'-triphosphoguanosine)-(2'-O-methyladenosine) in mRNA + formaldehyde + succinate + CO2. It carries out the reaction an N(6)-methyladenosine in mRNA + 2-oxoglutarate + O2 = an adenosine in mRNA + formaldehyde + succinate + CO2. The catalysed reaction is N(6)-methyladenosine in U6 snRNA + 2-oxoglutarate + O2 = adenosine in U6 snRNA + formaldehyde + succinate + CO2. The enzyme catalyses a 5'-end (N(7)-methyl 5'-triphosphoguanosine)-(N(6),2'-O-dimethyladenosine) in U6 snRNA + 2-oxoglutarate + O2 = a 5'-end (N(7)-methyl 5'-triphosphoguanosine)-(2'-O-methyladenosine) in U6 snRNA + formaldehyde + succinate + CO2. It catalyses the reaction an N(1)-methyladenosine in tRNA + 2-oxoglutarate + O2 = an adenosine in tRNA + formaldehyde + succinate + CO2. Its activity is regulated as follows. Activated by ascorbate. Inhibited by N-oxalylglycine, fumarate and succinate. Its function is as follows. RNA demethylase that mediates oxidative demethylation of different RNA species, such as mRNAs, tRNAs and snRNAs, and acts as a regulator of fat mass, adipogenesis and energy homeostasis. Specifically demethylates N(6)-methyladenosine (m6A) RNA, the most prevalent internal modification of messenger RNA (mRNA) in higher eukaryotes. M6A demethylation by FTO affects mRNA expression and stability. Also able to demethylate m6A in U6 small nuclear RNA (snRNA). Mediates demethylation of N(6),2'-O-dimethyladenosine cap (m6A(m)), by demethylating the N(6)-methyladenosine at the second transcribed position of mRNAs and U6 snRNA. Demethylation of m6A(m) in the 5'-cap by FTO affects mRNA stability by promoting susceptibility to decapping. Also acts as a tRNA demethylase by removing N(1)-methyladenine from various tRNAs. Has no activity towards 1-methylguanine. Has no detectable activity towards double-stranded DNA. Also able to repair alkylated DNA and RNA by oxidative demethylation: demethylates single-stranded RNA containing 3-methyluracil, single-stranded DNA containing 3-methylthymine and has low demethylase activity towards single-stranded DNA containing 1-methyladenine or 3-methylcytosine. Ability to repair alkylated DNA and RNA is however unsure in vivo. Involved in the regulation of fat mass, adipogenesis and body weight, thereby contributing to the regulation of body size and body fat accumulation. Involved in the regulation of thermogenesis and the control of adipocyte differentiation into brown or white fat cells. Regulates activity of the dopaminergic midbrain circuitry via its ability to demethylate m6A in mRNAs. This Rattus norvegicus (Rat) protein is Alpha-ketoglutarate-dependent dioxygenase FTO.